The chain runs to 376 residues: Chaperone protein DnaJ (376 aa).

One can recognise a J domain in the interval aspartate 4–glycine 68. The CR-type zinc-finger motif lies at glycine 135–proline 217. Positions 148, 151, 165, 168, 191, 194, 205, and 208 each coordinate Zn(2+). 4 CXXCXGXG motif repeats span residues cysteine 148 to glycine 155, cysteine 165 to glycine 172, cysteine 191 to glycine 198, and cysteine 205 to glycine 212.

The protein belongs to the DnaJ family. Homodimer. The cofactor is Zn(2+).

The protein localises to the cytoplasm. Functionally, participates actively in the response to hyperosmotic and heat shock by preventing the aggregation of stress-denatured proteins and by disaggregating proteins, also in an autonomous, DnaK-independent fashion. Unfolded proteins bind initially to DnaJ; upon interaction with the DnaJ-bound protein, DnaK hydrolyzes its bound ATP, resulting in the formation of a stable complex. GrpE releases ADP from DnaK; ATP binding to DnaK triggers the release of the substrate protein, thus completing the reaction cycle. Several rounds of ATP-dependent interactions between DnaJ, DnaK and GrpE are required for fully efficient folding. Also involved, together with DnaK and GrpE, in the DNA replication of plasmids through activation of initiation proteins. This chain is Chaperone protein DnaJ, found in Synechococcus sp. (strain ATCC 27144 / PCC 6301 / SAUG 1402/1) (Anacystis nidulans).